We begin with the raw amino-acid sequence, 600 residues long: UvrABC system protein C (600 aa).

Residues 15–92 (DKPGCYLMKD…IKKYQPYYNV (78 aa)) form the GIY-YIG domain. Positions 197-232 (AQVKQDLTEKMTQASMDLEFERAAEIRDQLKYIEQT) constitute a UVR domain.

The protein belongs to the UvrC family. As to quaternary structure, interacts with UvrB in an incision complex.

The protein localises to the cytoplasm. Its function is as follows. The UvrABC repair system catalyzes the recognition and processing of DNA lesions. UvrC both incises the 5' and 3' sides of the lesion. The N-terminal half is responsible for the 3' incision and the C-terminal half is responsible for the 5' incision. The polypeptide is UvrABC system protein C (Lactobacillus johnsonii (strain CNCM I-12250 / La1 / NCC 533)).